A 308-amino-acid chain; its full sequence is Malate dehydrogenase (308 aa).

NAD(+) is bound by residues 6–11 and Asp31; that span reads GSGRVG. Arg80 and Arg86 together coordinate substrate. NAD(+) is bound by residues Asn93 and 116 to 118; that span reads TTN. Residues Asn118 and Arg149 each coordinate substrate. His173 serves as the catalytic Proton acceptor.

Belongs to the LDH/MDH superfamily.

The enzyme catalyses (S)-malate + NAD(+) = oxaloacetate + NADH + H(+). In terms of biological role, catalyzes the reversible oxidation of malate to oxaloacetate. The protein is Malate dehydrogenase (mdh) of Thermoproteus tenax (strain ATCC 35583 / DSM 2078 / JCM 9277 / NBRC 100435 / Kra 1).